The chain runs to 366 residues: Chaperone protein DnaJ (366 aa).

A J domain is found at 5-69 (DYYEVLGVSK…QKRAQYDQFG (65 aa)). The CR-type zinc finger occupies 128–210 (GKELNVEIPV…CHGTGKVRKR (83 aa)). Positions 141, 144, 158, 161, 184, 187, 198, and 201 each coordinate Zn(2+). 4 CXXCXGXG motif repeats span residues 141–148 (CDTCHGSG), 158–165 (CKYCSGTG), 184–191 (CRHCSGTG), and 198–205 (CTTCHGTG).

This sequence belongs to the DnaJ family. In terms of assembly, homodimer. The cofactor is Zn(2+).

Its subcellular location is the cytoplasm. Participates actively in the response to hyperosmotic and heat shock by preventing the aggregation of stress-denatured proteins and by disaggregating proteins, also in an autonomous, DnaK-independent fashion. Unfolded proteins bind initially to DnaJ; upon interaction with the DnaJ-bound protein, DnaK hydrolyzes its bound ATP, resulting in the formation of a stable complex. GrpE releases ADP from DnaK; ATP binding to DnaK triggers the release of the substrate protein, thus completing the reaction cycle. Several rounds of ATP-dependent interactions between DnaJ, DnaK and GrpE are required for fully efficient folding. Also involved, together with DnaK and GrpE, in the DNA replication of plasmids through activation of initiation proteins. In Bacillus cytotoxicus (strain DSM 22905 / CIP 110041 / 391-98 / NVH 391-98), this protein is Chaperone protein DnaJ.